Here is a 460-residue protein sequence, read N- to C-terminus: MLTIYNTLSKTKEVFKPLDGNKVRMYVCGMTVYDYCHLGHGRSMVAFDLVTRWLRKSGYELTYVRNITDIDDKIINRANENGETFDALTARMIDAMHEDERRLNILPPDQEPRATDHIAGMHAMIQTLIDKGYAYAPGNGDVYYRVGKFVGYGKLSRKKIEDLRIGARIEVDEAKQDPLDFVLWKGVKPGEPSWESPWGPGRPGWHIECSVMSTRCLGESFDIHGGGSDLEFPHHENEIAQSEAATGKQYANAWMHCGMIRINGEKMSKSLNNFFTIRDVLEKYHPEVVRYLLVASHYRSAINYSEDSLRDAKGALERFYHALRGLPRVAAKGGEAFVERFSVAMNDDFGTPEACAVLFDLVREINRLRDSDPEAAAGLAGRLRELGDVLGVLQLEADDFLRAGAEGKVDAAEVEGLIQARLQARADKNWAESDRIRDQLTAMGVVLEDSKGTTTWRLAD.

A Zn(2+)-binding site is contributed by Cys28. The short motif at 30–40 (MTVYDYCHLGH) is the 'HIGH' region element. Residues Cys209, His234, and Glu238 each contribute to the Zn(2+) site. A 'KMSKS' region motif is present at residues 266 to 270 (KMSKS). Lys269 is an ATP binding site.

This sequence belongs to the class-I aminoacyl-tRNA synthetase family. Monomer. Zn(2+) serves as cofactor.

It localises to the cytoplasm. The catalysed reaction is tRNA(Cys) + L-cysteine + ATP = L-cysteinyl-tRNA(Cys) + AMP + diphosphate. This is Cysteine--tRNA ligase from Pseudomonas putida (strain ATCC 700007 / DSM 6899 / JCM 31910 / BCRC 17059 / LMG 24140 / F1).